A 118-amino-acid polypeptide reads, in one-letter code: Small ribosomal subunit protein uS13 (118 aa).

The disordered stretch occupies residues arginine 93–lysine 118.

This sequence belongs to the universal ribosomal protein uS13 family. In terms of assembly, part of the 30S ribosomal subunit. Forms a loose heterodimer with protein S19. Forms two bridges to the 50S subunit in the 70S ribosome.

In terms of biological role, located at the top of the head of the 30S subunit, it contacts several helices of the 16S rRNA. In the 70S ribosome it contacts the 23S rRNA (bridge B1a) and protein L5 of the 50S subunit (bridge B1b), connecting the 2 subunits; these bridges are implicated in subunit movement. Contacts the tRNAs in the A and P-sites. In Pseudomonas paraeruginosa (strain DSM 24068 / PA7) (Pseudomonas aeruginosa (strain PA7)), this protein is Small ribosomal subunit protein uS13.